Reading from the N-terminus, the 85-residue chain is Small ribosomal subunit protein bS16 (85 aa).

It belongs to the bacterial ribosomal protein bS16 family.

The chain is Small ribosomal subunit protein bS16 from Buchnera aphidicola subsp. Schizaphis graminum (strain Sg).